A 109-amino-acid polypeptide reads, in one-letter code: MFGKGGMGNLMKQAQMMQEKMAKMQEEIARMEVTGESGAGLVKVTMTGTHNVRKVEIDPSLLEDDKELLEDLVAAACNDAARRVEENQKTKMAEVTGGMQLPPGMKMPF.

The protein belongs to the YbaB/EbfC family. In terms of assembly, homodimer.

It localises to the cytoplasm. The protein resides in the nucleoid. Functionally, binds to DNA and alters its conformation. May be involved in regulation of gene expression, nucleoid organization and DNA protection. This is Nucleoid-associated protein Sama_1311 from Shewanella amazonensis (strain ATCC BAA-1098 / SB2B).